A 177-amino-acid chain; its full sequence is Ribosome maturation factor RimM (177 aa).

Residues 92–166 form the PRC barrel domain; it reads EDTFYHADLM…RIVVVPDTNP (75 aa).

It belongs to the RimM family. In terms of assembly, binds ribosomal protein uS19.

The protein resides in the cytoplasm. Functionally, an accessory protein needed during the final step in the assembly of 30S ribosomal subunit, possibly for assembly of the head region. Essential for efficient processing of 16S rRNA. May be needed both before and after RbfA during the maturation of 16S rRNA. It has affinity for free ribosomal 30S subunits but not for 70S ribosomes. The chain is Ribosome maturation factor RimM from Azorhizobium caulinodans (strain ATCC 43989 / DSM 5975 / JCM 20966 / LMG 6465 / NBRC 14845 / NCIMB 13405 / ORS 571).